The following is a 236-amino-acid chain: Thrombin-like enzyme kangshuanmei (236 aa).

Positions 1–227 (VIGGDECNIN…HLDWIQSIIA (227 aa)) constitute a Peptidase S1 domain. 6 disulfides stabilise this stretch: Cys7–Cys141, Cys28–Cys44, Cys78–Cys234, Cys120–Cys188, Cys152–Cys167, and Cys178–Cys203. His43 acts as the Charge relay system in catalysis. An N-linked (GlcNAc...) asparagine glycan is attached at Asn81. Asp88 functions as the Charge relay system in the catalytic mechanism. Residues Asn99 and Asn148 are each glycosylated (N-linked (GlcNAc...) asparagine). Ser182 functions as the Charge relay system in the catalytic mechanism. An N-linked (GlcNAc...) asparagine glycan is attached at Asn229.

Belongs to the peptidase S1 family. Snake venom subfamily. As to quaternary structure, monomer. In terms of processing, N-glycosylated by units composed of Fuc, Man, GlcNAc, Gal and NeuAC residues. As to expression, expressed by the venom gland.

It localises to the secreted. Its activity is regulated as follows. Inhibited by 4-(2-aminoethyl)-benzensulfonyl fluoride. Not inhibited by antithrombin-III. Its function is as follows. Thrombin-like snake venom serine protease. Cleaves bonds after Arg and Lys, converts fibrinogen (FGA and FGB) to fibrin and releases both fibrinopeptides A and B, and fibrinogen peptide Bbeta1-42. Has a blood clotting activity. This Gloydius brevicauda (Korean slamosa snake) protein is Thrombin-like enzyme kangshuanmei.